Here is a 240-residue protein sequence, read N- to C-terminus: tRNA (guanine-N(1)-)-methyltransferase (240 aa).

S-adenosyl-L-methionine contacts are provided by residues G110 and 130–135 (IGDYVL).

It belongs to the RNA methyltransferase TrmD family. In terms of assembly, homodimer.

It is found in the cytoplasm. It carries out the reaction guanosine(37) in tRNA + S-adenosyl-L-methionine = N(1)-methylguanosine(37) in tRNA + S-adenosyl-L-homocysteine + H(+). Functionally, specifically methylates guanosine-37 in various tRNAs. The protein is tRNA (guanine-N(1)-)-methyltransferase of Macrococcus caseolyticus (strain JCSC5402) (Macrococcoides caseolyticum).